Here is a 422-residue protein sequence, read N- to C-terminus: Serine protease HTRA2, mitochondrial (422 aa).

Residues 1–17 constitute a mitochondrion transit peptide; sequence MALRGSHRLEVIFKRCI. Residues 18 to 74 constitute a propeptide that is removed on maturation; sequence ASPVFHSHAANRRSSQLAIKGTDPSSNGNSGQDQQNGEQKAKGWRRLVRFFVPFSLG. The segment covering 29 to 55 has biased composition (polar residues); sequence RRSSQLAIKGTDPSSNGNSGQDQQNGE. Residues 29-56 form a disordered region; the sequence is RRSSQLAIKGTDPSSNGNSGQDQQNGEQ. Residues 64–82 traverse the membrane as a helical segment; sequence LVRFFVPFSLGAAVSAAVI. 2 short sequence motifs (IAP-binding) span residues 75 to 78 and 94 to 97; these read AAVS and SKMT. Positions 139 to 302 are serine protease; it reads SNGSGFIIEQ…IPIDYVKVFL (164 aa). Residues H157, D189, and S266 each act as charge relay system in the active site. The 86-residue stretch at 325-410 folds into the PDZ domain; sequence MGITMLTLTP…NLDIVILRGV (86 aa).

This sequence belongs to the peptidase S1C family. In terms of assembly, interacts with th/DIAP1 (via BIR 2 domain).

The protein resides in the mitochondrion intermembrane space. It is found in the mitochondrion membrane. The catalysed reaction is Cleavage of non-polar aliphatic amino-acids at the P1 position, with a preference for Val, Ile and Met. At the P2 and P3 positions, Arg is selected most strongly with a secondary preference for other hydrophilic residues.. Functionally, serine protease that shows proteolytic activity against a non-specific substrate beta-casein. Promotes or induces cell death either by direct binding to and inhibition of BIRC proteins (also called inhibitor of apoptosis proteins, IAPs), leading to an increase in caspase activity, or by a BIRC inhibition-independent, caspase-independent and serine protease activity-dependent mechanism. Can antagonize antiapoptotic activity of th/Diap1 by directly inducing the degradation of th/Diap1. In Drosophila yakuba (Fruit fly), this protein is Serine protease HTRA2, mitochondrial.